Reading from the N-terminus, the 511-residue chain is Sterol 14-alpha demethylase resB (511 aa).

A helical transmembrane segment spans residues 3-23 (ILWIVAYALLAFAASIALNLV). Residue Cys-451 coordinates heme.

This sequence belongs to the cytochrome P450 family. It depends on heme as a cofactor.

The protein resides in the membrane. It catalyses the reaction a 14alpha-methyl steroid + 3 reduced [NADPH--hemoprotein reductase] + 3 O2 = a Delta(14) steroid + formate + 3 oxidized [NADPH--hemoprotein reductase] + 4 H2O + 4 H(+). The catalysed reaction is a 14alpha-methyl steroid + reduced [NADPH--hemoprotein reductase] + O2 = a 14alpha-hydroxymethyl steroid + oxidized [NADPH--hemoprotein reductase] + H2O + H(+). The enzyme catalyses a 14alpha-hydroxymethyl steroid + reduced [NADPH--hemoprotein reductase] + O2 = a 14alpha-formyl steroid + oxidized [NADPH--hemoprotein reductase] + 2 H2O + H(+). It carries out the reaction a 14alpha-formyl steroid + reduced [NADPH--hemoprotein reductase] + O2 = a Delta(14) steroid + formate + oxidized [NADPH--hemoprotein reductase] + H2O + 2 H(+). It catalyses the reaction lanosterol + 3 reduced [NADPH--hemoprotein reductase] + 3 O2 = 4,4-dimethyl-5alpha-cholesta-8,14,24-trien-3beta-ol + formate + 3 oxidized [NADPH--hemoprotein reductase] + 4 H2O + 4 H(+). The catalysed reaction is lanosterol + reduced [NADPH--hemoprotein reductase] + O2 = 32-hydroxylanosterol + oxidized [NADPH--hemoprotein reductase] + H2O + H(+). The enzyme catalyses 32-hydroxylanosterol + reduced [NADPH--hemoprotein reductase] + O2 = 32-oxolanosterol + oxidized [NADPH--hemoprotein reductase] + 2 H2O + H(+). It carries out the reaction 32-oxolanosterol + reduced [NADPH--hemoprotein reductase] + O2 = 4,4-dimethyl-5alpha-cholesta-8,14,24-trien-3beta-ol + formate + oxidized [NADPH--hemoprotein reductase] + H2O + 2 H(+). It catalyses the reaction eburicol + 3 reduced [NADPH--hemoprotein reductase] + 3 O2 = 14-demethyleburicol + formate + 3 oxidized [NADPH--hemoprotein reductase] + 4 H2O + 4 H(+). The catalysed reaction is eburicol + reduced [NADPH--hemoprotein reductase] + O2 = 32-hydroxyeburicol + oxidized [NADPH--hemoprotein reductase] + H2O + H(+). The enzyme catalyses 32-hydroxyeburicol + reduced [NADPH--hemoprotein reductase] + O2 = 32-oxoeburicol + oxidized [NADPH--hemoprotein reductase] + 2 H2O + H(+). It carries out the reaction 32-oxoeburicol + reduced [NADPH--hemoprotein reductase] + O2 = 14-demethyleburicol + formate + oxidized [NADPH--hemoprotein reductase] + H2O + 2 H(+). Its function is as follows. Sterol 14-alpha demethylase; part of the gene cluster that mediates the biosynthesis of the tetrahydropyranyl antifungal agent restricticin that acts as an inhibitor of CYP51 and blocks the ergosterol biosynthesis. Sterol 14-alpha-demethylase plays a critical role in the biosynthesis of ergosterol, the major sterol component in fungal membranes that participates in a variety of functions. ResB acts as a self-resistant CYP51 that contains mutations found in CYP51s isolated from azole resistance strains and that is not inhibited by the final product of the cluster, restricticin. This chain is Sterol 14-alpha demethylase resB, found in Aspergillus sclerotiorum.